Reading from the N-terminus, the 249-residue chain is Ubiquinone biosynthesis O-methyltransferase (249 aa).

S-adenosyl-L-methionine contacts are provided by R41, G72, D93, and M136.

It belongs to the methyltransferase superfamily. UbiG/COQ3 family.

It carries out the reaction a 3-demethylubiquinol + S-adenosyl-L-methionine = a ubiquinol + S-adenosyl-L-homocysteine + H(+). It catalyses the reaction a 3-(all-trans-polyprenyl)benzene-1,2-diol + S-adenosyl-L-methionine = a 2-methoxy-6-(all-trans-polyprenyl)phenol + S-adenosyl-L-homocysteine + H(+). Its pathway is cofactor biosynthesis; ubiquinone biosynthesis. In terms of biological role, O-methyltransferase that catalyzes the 2 O-methylation steps in the ubiquinone biosynthetic pathway. The sequence is that of Ubiquinone biosynthesis O-methyltransferase from Methylobacterium nodulans (strain LMG 21967 / CNCM I-2342 / ORS 2060).